Consider the following 252-residue polypeptide: Ribosomal RNA small subunit methyltransferase J (252 aa).

Residues 101 to 102 (RD), 117 to 118 (ER), 153 to 154 (SS), and Asp-171 contribute to the S-adenosyl-L-methionine site.

It belongs to the methyltransferase superfamily. RsmJ family.

The protein resides in the cytoplasm. It catalyses the reaction guanosine(1516) in 16S rRNA + S-adenosyl-L-methionine = N(2)-methylguanosine(1516) in 16S rRNA + S-adenosyl-L-homocysteine + H(+). In terms of biological role, specifically methylates the guanosine in position 1516 of 16S rRNA. The polypeptide is Ribosomal RNA small subunit methyltransferase J (Salmonella paratyphi B (strain ATCC BAA-1250 / SPB7)).